Consider the following 1073-residue polypeptide: Duffy receptor alpha form (1073 aa).

An N-terminal signal peptide occupies residues 1–21 (MEGKKKRPLFFLLVLLLSHKA). Over 22-1007 (NNVLFERMNG…YECFTKGSST (986 aa)) the chain is Extracellular. N-linked (GlcNAc...) asparagine glycans are attached at residues Asn-134, Asn-179, and Asn-202. 2 cysteine pairs are disulfide-bonded: Cys-214–Cys-243 and Cys-227–Cys-234. N-linked (GlcNAc...) asparagine glycosylation is found at Asn-252 and Asn-348. Cystine bridges form between Cys-297-Cys-374, Cys-412-Cys-429, Cys-424-Cys-504, and Cys-433-Cys-502. Positions 517–915 (VKNVGSGVES…LNNRKLNRDQ (399 aa)) are disordered. Residues 528–543 (AASSNPITEAVKSSSG) are compositionally biased toward polar residues. Positions 546-561 (KVQEDSAHKSVNKGEG) are enriched in basic and acidic residues. Positions 562-576 (KSSTNEADPGSQSGA) are enriched in polar residues. Basic and acidic residues-rich tracts occupy residues 675–710 (GEVH…DDRS) and 717–734 (HTDE…KDTE). N-linked (GlcNAc...) asparagine glycosylation occurs at Asn-679. Residues 736 to 766 (AGGSTLTPEQNVSVASDNGNVPGSGNKQNEG) are compositionally biased toward polar residues. N-linked (GlcNAc...) asparagine glycosylation is found at Asn-746, Asn-779, and Asn-788. Residues 799–810 (GNEKDFQKHDFM) show a composition bias toward basic and acidic residues. 2 stretches are compositionally biased toward low complexity: residues 821–843 (SDHT…SSDH) and 851–864 (SDQT…SDQT). Positions 867-891 (TEGHHRDNVRNPEIKSSEDMSKGDF) are enriched in basic and acidic residues. Positions 893-909 (RNSNSNELYSHNNLNNR) are enriched in polar residues. Residues 1008–1029 (GIVYFATGGAFLIILLLFASWN) form a helical membrane-spanning segment. Residues 1030–1073 (AASNDYEEEATFDEFVEYSDDIHRTPLMPNDIEHMQQFTPLDYS) lie on the Cytoplasmic side of the membrane.

In terms of assembly, interacts (via region II) with human ACKR1 (via N-terminal extracellular domain). Interacts (via region II) with rhesus macaque ACKR1 (via N-terminal extracellular domain).

It is found in the cell membrane. The protein resides in the cytoplasmic vesicle. It localises to the secretory vesicle. The protein localises to the microneme. Binds to the human erythrocyte Duffy blood group determinant (ACKR1). Binds to the rhesus macaque erythrocyte Duffy blood group determinant (ACKR1). This chain is Duffy receptor alpha form, found in Plasmodium knowlesi.